The sequence spans 281 residues: uncharacterized protein (281 aa).

A run of 8 helical transmembrane segments spans residues 30–50 (AIVA…FIVI), 54–74 (VFIS…GYYF), 76–96 (FNPL…MGWV), 106–126 (TLIG…IDLT), 153–173 (AGLD…FLAI), 198–218 (IALT…IALL), 235–255 (MMAV…ALSY), and 259–279 (LSSG…SLAF).

Belongs to the ABC-3 integral membrane protein family.

It is found in the cell membrane. This is an uncharacterized protein from Synechocystis sp. (strain ATCC 27184 / PCC 6803 / Kazusa).